The following is an 808-amino-acid chain: Phospholipase D alpha 1 (808 aa).

A C2 domain is found at 1–125; that stretch reads MAQILLHGTL…LEGEEIDKWV (125 aa). D186 provides a ligand contact to Ca(2+). A PLD phosphodiesterase 1 domain is found at 326–364; sequence TMFTHHQKIVVVDSELPSGESEKRRILSFVGGIDLCDGR. Residues H331, K333, and D338 contribute to the active site. H331 provides a ligand contact to a 1,2-diacyl-sn-glycero-3-phosphate. 2 residues coordinate Ca(2+): H370 and H404. A 1,2-diacyl-sn-glycero-3-phosphate-binding residues include Q520 and H659. The PLD phosphodiesterase 2 domain maps to 654-681; the sequence is FMIYVHSKMMIVDDEYIIVGSANINQRS. Catalysis depends on residues H659, K661, and D666. E720 is a binding site for Ca(2+).

Belongs to the phospholipase D family. C2-PLD subfamily. Ca(2+) is required as a cofactor.

It carries out the reaction a 1,2-diacyl-sn-glycero-3-phosphocholine + H2O = a 1,2-diacyl-sn-glycero-3-phosphate + choline + H(+). Hydrolyzes glycerol-phospholipids at the terminal phosphodiesteric bond. Plays an important role in various cellular processes. The chain is Phospholipase D alpha 1 (PLD1) from Nicotiana tabacum (Common tobacco).